Reading from the N-terminus, the 190-residue chain is Protein LZIC (190 aa).

Residues 2–63 (ASRGKTETSK…SEFNDSLKKI (62 aa)) adopt a coiled-coil conformation.

The protein belongs to the CTNNBIP1 family. Does not interact with CTNNB1.

The protein is Protein LZIC (Lzic) of Rattus norvegicus (Rat).